The following is a 49-amino-acid chain: Large ribosomal subunit protein bL33B (49 aa).

The protein belongs to the bacterial ribosomal protein bL33 family.

The sequence is that of Large ribosomal subunit protein bL33B from Lactobacillus gasseri (strain ATCC 33323 / DSM 20243 / BCRC 14619 / CIP 102991 / JCM 1131 / KCTC 3163 / NCIMB 11718 / NCTC 13722 / AM63).